The primary structure comprises 964 residues: Glycine dehydrogenase (decarboxylating) (964 aa).

A compositionally biased stretch (polar residues) spans 1 to 11 (MNSTLQNQTKT). Positions 1–21 (MNSTLQNQTKTNLEKVGTDPL) are disordered. Lys-713 is modified (N6-(pyridoxal phosphate)lysine).

Belongs to the GcvP family. As to quaternary structure, the glycine cleavage system is composed of four proteins: P, T, L and H. The cofactor is pyridoxal 5'-phosphate.

It carries out the reaction N(6)-[(R)-lipoyl]-L-lysyl-[glycine-cleavage complex H protein] + glycine + H(+) = N(6)-[(R)-S(8)-aminomethyldihydrolipoyl]-L-lysyl-[glycine-cleavage complex H protein] + CO2. Its function is as follows. The glycine cleavage system catalyzes the degradation of glycine. The P protein binds the alpha-amino group of glycine through its pyridoxal phosphate cofactor; CO(2) is released and the remaining methylamine moiety is then transferred to the lipoamide cofactor of the H protein. The sequence is that of Glycine dehydrogenase (decarboxylating) from Leptospira interrogans serogroup Icterohaemorrhagiae serovar Lai (strain 56601).